Here is a 489-residue protein sequence, read N- to C-terminus: Glucose-6-phosphate 1-dehydrogenase (489 aa).

NADP(+)-binding positions include 15-22, arginine 49, 86-87, and lysine 149; these read GATGDLAK and DV. Positions 179, 183, 217, and 236 each coordinate substrate. Histidine 241 acts as the Proton acceptor in catalysis. Substrate is bound by residues lysine 341 and lysine 346.

It belongs to the glucose-6-phosphate dehydrogenase family.

It catalyses the reaction D-glucose 6-phosphate + NADP(+) = 6-phospho-D-glucono-1,5-lactone + NADPH + H(+). It participates in carbohydrate degradation; pentose phosphate pathway; D-ribulose 5-phosphate from D-glucose 6-phosphate (oxidative stage): step 1/3. Its function is as follows. Catalyzes the oxidation of glucose 6-phosphate to 6-phosphogluconolactone. This is Glucose-6-phosphate 1-dehydrogenase from Bacillus subtilis (strain 168).